The following is a 149-amino-acid chain: SsrA-binding protein (149 aa).

The protein belongs to the SmpB family.

It localises to the cytoplasm. In terms of biological role, required for rescue of stalled ribosomes mediated by trans-translation. Binds to transfer-messenger RNA (tmRNA), required for stable association of tmRNA with ribosomes. tmRNA and SmpB together mimic tRNA shape, replacing the anticodon stem-loop with SmpB. tmRNA is encoded by the ssrA gene; the 2 termini fold to resemble tRNA(Ala) and it encodes a 'tag peptide', a short internal open reading frame. During trans-translation Ala-aminoacylated tmRNA acts like a tRNA, entering the A-site of stalled ribosomes, displacing the stalled mRNA. The ribosome then switches to translate the ORF on the tmRNA; the nascent peptide is terminated with the 'tag peptide' encoded by the tmRNA and targeted for degradation. The ribosome is freed to recommence translation, which seems to be the essential function of trans-translation. The chain is SsrA-binding protein from Anaplasma phagocytophilum (strain HZ).